Here is a 185-residue protein sequence, read N- to C-terminus: Neuronal vesicle trafficking-associated protein 1 (185 aa).

The Cytoplasmic portion of the chain corresponds to 1–82; the sequence is MVKLGNNFSE…ITEGVSERFK (82 aa). A helical; Signal-anchor for type II membrane protein membrane pass occupies residues 83-103; that stretch reads VTVLVLFALAFLTCVVFLVVY. The Lumenal segment spans residues 104–185; the sequence is KVYKYDHTCP…QETEAAEKSA (82 aa).

Belongs to the NSG family.

Its subcellular location is the membrane. The protein localises to the golgi apparatus. It is found in the trans-Golgi network membrane. It localises to the endosome membrane. The protein resides in the cell projection. Its subcellular location is the dendrite. The protein localises to the early endosome membrane. It is found in the late endosome membrane. It localises to the lysosome lumen. The protein resides in the recycling endosome membrane. Its subcellular location is the cytoplasmic vesicle membrane. The protein localises to the golgi stack membrane. It is found in the endosome. It localises to the multivesicular body membrane. Its function is as follows. Plays a role in the recycling mechanism in neurons of multiple receptors and acts at the level of early endosomes to promote sorting of receptors toward a recycling pathway. This Gallus gallus (Chicken) protein is Neuronal vesicle trafficking-associated protein 1.